Reading from the N-terminus, the 631-residue chain is Mercuric reductase (631 aa).

HMA domains are found at residues 2–66 (KKYR…YHPG) and 81–145 (KKYR…YQPG). 4 residues coordinate a metal cation: Cys13, Cys16, Cys92, and Cys95. FAD-binding residues include Ala181, Gly201, and Thr206. A disulfide bond links Cys207 and Cys212. FAD is bound by residues Lys216, Asp472, and Val480. Residues Cys628 and Cys629 each coordinate Hg(2+).

This sequence belongs to the class-I pyridine nucleotide-disulfide oxidoreductase family. In terms of assembly, homodimer. It depends on FAD as a cofactor.

The catalysed reaction is Hg + NADP(+) + H(+) = Hg(2+) + NADPH. Functionally, resistance to Hg(2+) in bacteria appears to be governed by a specialized system which includes mercuric reductase. MerA protein is responsible for volatilizing mercury as Hg(0). The sequence is that of Mercuric reductase (merA) from Bacillus cereus.